Reading from the N-terminus, the 427-residue chain is Gamma-glutamyl phosphate reductase (427 aa).

It belongs to the gamma-glutamyl phosphate reductase family.

The protein localises to the cytoplasm. It carries out the reaction L-glutamate 5-semialdehyde + phosphate + NADP(+) = L-glutamyl 5-phosphate + NADPH + H(+). It functions in the pathway amino-acid biosynthesis; L-proline biosynthesis; L-glutamate 5-semialdehyde from L-glutamate: step 2/2. Its function is as follows. Catalyzes the NADPH-dependent reduction of L-glutamate 5-phosphate into L-glutamate 5-semialdehyde and phosphate. The product spontaneously undergoes cyclization to form 1-pyrroline-5-carboxylate. This Rhizobium johnstonii (strain DSM 114642 / LMG 32736 / 3841) (Rhizobium leguminosarum bv. viciae) protein is Gamma-glutamyl phosphate reductase.